The chain runs to 209 residues: Large ribosomal subunit protein uL3c (209 aa).

The disordered stretch occupies residues 132–154 (PMSHGSKNHRLPGSIGAGSTPGR).

The protein belongs to the universal ribosomal protein uL3 family. In terms of assembly, part of the 50S ribosomal subunit.

The protein localises to the plastid. It is found in the cyanelle. Its function is as follows. One of the primary rRNA binding proteins, it binds directly near the 3'-end of the 23S rRNA, where it nucleates assembly of the 50S subunit. In Cyanophora paradoxa, this protein is Large ribosomal subunit protein uL3c (rpl3).